A 572-amino-acid chain; its full sequence is Phospholipase B-like protein B (572 aa).

An N-terminal signal peptide occupies residues 1 to 28 (MNKLKSNFILNIVILFTILIFNINFINC). Residues asparagine 73, asparagine 138, asparagine 219, asparagine 427, asparagine 544, and asparagine 564 are each glycosylated (N-linked (GlcNAc...) asparagine).

Belongs to the phospholipase B-like family.

The protein resides in the secreted. Probable phospholipase. In Dictyostelium discoideum (Social amoeba), this protein is Phospholipase B-like protein B (plbB).